Here is a 368-residue protein sequence, read N- to C-terminus: N-acetylneuraminate epimerase (368 aa).

Residues 1-19 (MNKTITALAILMASFAANA) form the signal peptide. 7 Kelch repeats span residues 40–84 (TVYI…AFID), 86–137 (NLYV…FVHN), 139–173 (KAYVTGGVNQNIFNGYFEDLNEAGKDSTAVDKINA), 174–219 (HYFD…VNKG), 222–265 (TWLI…VAGG), 287–336 (ENYQ…PWNN), and 338–367 (LLIIGGETAGGKAVTDSVLISVKDNKVTVQ). E228 serves as the catalytic Proton acceptor.

The protein belongs to the NanM family. As to quaternary structure, homodimer.

The protein resides in the periplasm. The catalysed reaction is N-acetyl-alpha-neuraminate = N-acetyl-beta-neuraminate. In terms of biological role, converts alpha-N-acetylneuranimic acid (Neu5Ac) to the beta-anomer, accelerating the equilibrium between the alpha- and beta-anomers. Probably facilitates sialidase-negative bacteria to compete successfully for limited amounts of extracellular Neu5Ac, which is likely taken up in the beta-anomer. In addition, the rapid removal of sialic acid from solution might be advantageous to the bacterium to damp down host responses. This chain is N-acetylneuraminate epimerase, found in Escherichia coli O157:H7.